The sequence spans 194 residues: WASH complex subunit 3 (194 aa).

Methionine 1 is subject to N-acetylmethionine. Positions 46–74 form a coiled coil; sequence TVCEEKLADLSLRIQQIETTLNILDAKLS. The segment covering 98–123 has biased composition (polar residues); it reads THSEATSEQSQQNSLQDSGPQESEVT. 2 disordered regions span residues 98–125 and 158–194; these read THSE…VTPE and SEGL…SFSD.

Belongs to the CCDC53 family. Component of the WASH core complex also described as WASH regulatory complex (SHRC) composed of WASHC1, WASHC2, WASHC3, WASHC4 and WASHC5. The WASH core complex associates via WASHC2 with the F-actin-capping protein dimer (formed by CAPZA1, CAPZA2 or CAPZA3 and CAPZB) in a transient or substoichiometric manner which was initially described as WASH complex.

It is found in the early endosome. Functionally, acts as a component of the WASH core complex that functions as a nucleation-promoting factor (NPF) at the surface of endosomes, where it recruits and activates the Arp2/3 complex to induce actin polymerization, playing a key role in the fission of tubules that serve as transport intermediates during endosome sorting. In Bos taurus (Bovine), this protein is WASH complex subunit 3.